Consider the following 375-residue polypeptide: Putative F-box only protein 11 (375 aa).

The region spanning 1 to 46 (MVSVNLPWELVEEILCRVPPQSLVKFRTVCKQWNSLFDDNKFVNDH) is the F-box domain.

In Arabidopsis thaliana (Mouse-ear cress), this protein is Putative F-box only protein 11 (FBX11).